We begin with the raw amino-acid sequence, 572 residues long: Proline--tRNA ligase (572 aa).

Belongs to the class-II aminoacyl-tRNA synthetase family. ProS type 1 subfamily. As to quaternary structure, homodimer.

Its subcellular location is the cytoplasm. The enzyme catalyses tRNA(Pro) + L-proline + ATP = L-prolyl-tRNA(Pro) + AMP + diphosphate. In terms of biological role, catalyzes the attachment of proline to tRNA(Pro) in a two-step reaction: proline is first activated by ATP to form Pro-AMP and then transferred to the acceptor end of tRNA(Pro). As ProRS can inadvertently accommodate and process non-cognate amino acids such as alanine and cysteine, to avoid such errors it has two additional distinct editing activities against alanine. One activity is designated as 'pretransfer' editing and involves the tRNA(Pro)-independent hydrolysis of activated Ala-AMP. The other activity is designated 'posttransfer' editing and involves deacylation of mischarged Ala-tRNA(Pro). The misacylated Cys-tRNA(Pro) is not edited by ProRS. The sequence is that of Proline--tRNA ligase from Yersinia enterocolitica serotype O:8 / biotype 1B (strain NCTC 13174 / 8081).